Reading from the N-terminus, the 488-residue chain is MSTLYIAGQWLAGQGEAFTSVNPVTQAVIWSGNGATAAQVESAVQAARQAFPAWAKRSLEERISVLEAFAASLKSRADELARCIGEETGKPLWEAATEVTSMVNKIAISVQSYRERTGEKSGPLGDATAVLRHKPHGVVAVFGPYNFPGHLPNGHIVPALLAGNSVLFKPSELTPKVAELTVQCWIEAGLPAGVLNLLQGARETGIALAANPGIDGLFFTGSSRTGNHLHQQFAGRPDKILALEMGGNNPLVVEQVADLDAAVYTIIQSAFISAGQRCTCARRLLVPQGAWGDTLLARLVAVSATIEVGAFDQQPAPFMGSVISLGAARALMDAQQQLLANGAVALLEMTQPQAQAALLTPGILDVSAVAERPDEELFGPLLQVIRYADFDDAIAEANNTQYGLAAGLLSDSAERYQQFWLESRAGIVNWNKQLTGAASSAPFGGVGASGNHRASAYYAADYCAYPVASLETPSLVLPSALTPGVRLS.

221–226 (GSSRTG) is an NAD(+) binding site. Residues glutamate 244 and cysteine 278 contribute to the active site.

It belongs to the aldehyde dehydrogenase family. AstD subfamily.

The enzyme catalyses N-succinyl-L-glutamate 5-semialdehyde + NAD(+) + H2O = N-succinyl-L-glutamate + NADH + 2 H(+). Its pathway is amino-acid degradation; L-arginine degradation via AST pathway; L-glutamate and succinate from L-arginine: step 4/5. In terms of biological role, catalyzes the NAD-dependent reduction of succinylglutamate semialdehyde into succinylglutamate. The protein is N-succinylglutamate 5-semialdehyde dehydrogenase of Pseudomonas fluorescens (strain ATCC BAA-477 / NRRL B-23932 / Pf-5).